Consider the following 151-residue polypeptide: Small ribosomal subunit protein uS15 (151 aa).

A disordered region spans residues M1–R20.

It belongs to the universal ribosomal protein uS15 family. As to quaternary structure, component of the small ribosomal subunit. Part of the small subunit (SSU) processome, composed of more than 70 proteins and the RNA chaperone small nucleolar RNA (snoRNA) U3.

The protein resides in the cytoplasm. It localises to the nucleus. Its subcellular location is the nucleolus. In terms of biological role, component of the small ribosomal subunit. The ribosome is a large ribonucleoprotein complex responsible for the synthesis of proteins in the cell. Part of the small subunit (SSU) processome, first precursor of the small eukaryotic ribosomal subunit. During the assembly of the SSU processome in the nucleolus, many ribosome biogenesis factors, an RNA chaperone and ribosomal proteins associate with the nascent pre-rRNA and work in concert to generate RNA folding, modifications, rearrangements and cleavage as well as targeted degradation of pre-ribosomal RNA by the RNA exosome. This Dictyostelium discoideum (Social amoeba) protein is Small ribosomal subunit protein uS15 (rps13).